A 438-amino-acid polypeptide reads, in one-letter code: Trigger factor (438 aa).

Residues 160–245 (DDKVTIDFVG…VKKIQQAELP (86 aa)) form the PPIase FKBP-type domain.

This sequence belongs to the FKBP-type PPIase family. Tig subfamily.

The protein localises to the cytoplasm. The catalysed reaction is [protein]-peptidylproline (omega=180) = [protein]-peptidylproline (omega=0). In terms of biological role, involved in protein export. Acts as a chaperone by maintaining the newly synthesized protein in an open conformation. Functions as a peptidyl-prolyl cis-trans isomerase. The chain is Trigger factor from Francisella tularensis subsp. holarctica (strain OSU18).